The primary structure comprises 328 residues: E3 ubiquitin-protein ligase RING1-like (328 aa).

The residue at position 2 (Ser2) is an N-acetylserine. The RING-type; atypical zinc finger occupies 216–257 (CAVCMDEFEDGSDVKQMPCKHVFHQDCLLPWLELHNSCPVCR). The segment at 264 to 328 (DPDYENRSQG…NLETRGEDLD (65 aa)) is disordered. A compositionally biased stretch (gly residues) spans 306–319 (SGSGSGAPGTGGGN).

In terms of processing, auto-ubiquitinated as part of the enzymatic reaction. As to expression, expressed in leaves, roots, trichomes, stipules, and also in anthers and stigma of flowers.

It carries out the reaction S-ubiquitinyl-[E2 ubiquitin-conjugating enzyme]-L-cysteine + [acceptor protein]-L-lysine = [E2 ubiquitin-conjugating enzyme]-L-cysteine + N(6)-ubiquitinyl-[acceptor protein]-L-lysine.. It participates in protein modification; protein ubiquitination. In terms of biological role, E3 ubiquitin-protein ligase which accepts ubiquitin from an E2 ubiquitin-conjugating enzyme in the form of a thioester and then directly transfers the ubiquitin to targeted substrates. Promotes polyubiquitination of target proteins. The polypeptide is E3 ubiquitin-protein ligase RING1-like (Arabidopsis thaliana (Mouse-ear cress)).